The sequence spans 100 residues: Integration host factor subunit alpha (100 aa).

Belongs to the bacterial histone-like protein family. Heterodimer of an alpha and a beta chain.

Its function is as follows. This protein is one of the two subunits of integration host factor, a specific DNA-binding protein that functions in genetic recombination as well as in transcriptional and translational control. The sequence is that of Integration host factor subunit alpha from Alcanivorax borkumensis (strain ATCC 700651 / DSM 11573 / NCIMB 13689 / SK2).